The following is a 497-amino-acid chain: Cytochrome P450 CYP94D108 (497 aa).

The chain crosses the membrane as a helical span at residues 6-26 (LLSLALLLLAAAAAAAFVLFP). Residue cysteine 439 participates in heme binding.

Belongs to the cytochrome P450 family. Mainly expressed in roots and, at low levels, in leaves, fruits and stems.

It localises to the membrane. Its pathway is steroid metabolism; cholesterol metabolism. In terms of biological role, involved in the biosynthesis of spiroketal steroid and saponin natural products from cholesterol such as diosgenin and analogs (e.g. furostanol and spirostanol), plant defense compounds used as main precursors for the industrial production of steroid hormones. During the 5,6-spiroketalization of cholesterol, may catalyze the 27-monohydroxylation of furostanol-type steroid to an intermediate product that undergoes a stereospecific formation of the terminal heterocycle to yield diosgenin. The polypeptide is Cytochrome P450 CYP94D108 (Paris polyphylla (Daiswa polyphylla)).